A 647-amino-acid chain; its full sequence is Pumilio homolog 3 (647 aa).

Residues 1 to 10 show a composition bias toward basic residues; sequence MEVKGKKKIT. The segment at 1 to 123 is disordered; the sequence is MEVKGKKKIT…KKKKELKQNR (123 aa). At lysine 33 the chain carries N6-acetyllysine. A compositionally biased stretch (basic residues) spans 59–68; the sequence is PGKKRVKQFK. Positions 93–123 are enriched in basic and acidic residues; that stretch reads FQPDGKSDESAAKKPKWDDFKKKKKELKQNR. A Nuclear localization signal motif is present at residues 105–117; the sequence is KKPKWDDFKKKKK. The PUM-HD domain occupies 142 to 509; that stretch reads ESLRRKDCDK…VVLDKSVCVL (368 aa). Pumilio repeat units lie at residues 176–211, 212–247, 248–276, 288–324, 325–360, 361–396, 397–434, 435–503, 504–550, 551–595, and 596–635; these read HDST…LSKA, KYSR…MLRH, SEAS…ELYG, PTLE…VIKH, SLVH…LAHT, HDGA…IANG, QYSH…IVND, KYGR…VVLD, KSVC…IAEH, PAGH…WASI, and NRGA…KSTS.

Interacts with PARP1 (via catalytic domain).

It is found in the nucleus. The protein localises to the nucleolus. The protein resides in the nucleoplasm. It localises to the chromosome. In terms of biological role, inhibits the poly(ADP-ribosyl)ation activity of PARP1 and the degradation of PARP1 by CASP3 following genotoxic stress. Binds to double-stranded RNA or DNA without sequence specificity. Involved in development of the eye and of primordial germ cells. This is Pumilio homolog 3 from Rattus norvegicus (Rat).